The following is a 610-amino-acid chain: Ubiquilin-like protein (610 aa).

Residues 31-105 (IRVIVKTPGN…IHVVIKSKHG (75 aa)) form the Ubiquitin-like domain. Residues 562–607 (QAPEVRFSKEMECLQAMGFVNYNANLQALIATDGDTNAAIYKLKSS) enclose the UBA domain.

In Mus musculus (Mouse), this protein is Ubiquilin-like protein (Ubqlnl).